The chain runs to 461 residues: Cysteine--tRNA ligase (461 aa).

Cysteine 28 is a binding site for Zn(2+). Positions 30 to 40 (ITVYDLCHIGH) match the 'HIGH' region motif. Zn(2+) contacts are provided by cysteine 209, histidine 234, and glutamate 238. Residues 266 to 270 (KMSKS) carry the 'KMSKS' region motif. Lysine 269 is a binding site for ATP.

Belongs to the class-I aminoacyl-tRNA synthetase family. In terms of assembly, monomer. The cofactor is Zn(2+).

The protein localises to the cytoplasm. It catalyses the reaction tRNA(Cys) + L-cysteine + ATP = L-cysteinyl-tRNA(Cys) + AMP + diphosphate. In Cronobacter sakazakii (strain ATCC BAA-894) (Enterobacter sakazakii), this protein is Cysteine--tRNA ligase.